Here is a 597-residue protein sequence, read N- to C-terminus: Phragmoplastin interacting protein 1 (597 aa).

Positions 18-136 (ESLSVSVSET…KTPKKAEEGN (119 aa)) are disordered. Over residues 20–29 (LSVSVSETNP) the composition is skewed to polar residues. A compositionally biased stretch (low complexity) spans 30 to 40 (QSQSLKLLLDS). 2 stretches are compositionally biased toward basic residues: residues 43–53 (HKPRLSKREKR) and 112–129 (QKKK…NKTP). The Nuclear localization signal signature appears at 112–119 (QKKKNKKK). RRM domains are found at residues 161–238 (NKLY…QYVK) and 262–338 (NRVY…CALK). CCHC-type zinc fingers lie at residues 397 to 411 (CYEC…TACP), 481 to 495 (CYEC…TACP), and 576 to 591 (CYEC…ACPN).

Interacts with phragmoplastins (e.g. DRP1A, DRP1B, DRP1C, DRP1D and DRP1E) and with GTP-bound ARAC11/ROP1 as well as with Ran2 transcripts.

Its subcellular location is the nucleus. The protein resides in the cell membrane. It is found in the cytoplasm. The protein localises to the cytoskeleton. It localises to the phragmoplast. RNA-binding protein which mediates polarized mRNA (e.g. Ran2 transcripts mRNA) transport from the nucleus to the vicinity of the cell plate during cytokinesis and phragmoplast formation. The sequence is that of Phragmoplastin interacting protein 1 from Arabidopsis thaliana (Mouse-ear cress).